A 129-amino-acid chain; its full sequence is uncharacterized protein (129 aa).

3 consecutive transmembrane segments (helical) span residues 22–42 (LASSFSNASTLLSFVFFFFFF), 55–75 (VGSFSASASAETLLDFFFFFF), and 88–108 (LPFTAASKSSGITFLVFFFFF).

The protein localises to the membrane. This is an uncharacterized protein from Saccharomyces cerevisiae (strain ATCC 204508 / S288c) (Baker's yeast).